The primary structure comprises 265 residues: MDILHAVFLALIQGITEFLPISSSAHLILPKELFGWEDQGLAFDVAVHVGTLSAVILYFRKDIVNLIAGWFGSITGKQSENGSLAWCIIVATVPAGLFGLLLGNFIEEHLRSVSVIATTTVVFGLLLWFADAKHSETKQLAQMTLFIALVIGLAQALAMIPGTSRSGITITAALLLGFGRSDAARFSFLLSIPIITLSGGYMGLKLLEESNVNWQEIGVGVLVSAISAYICIHYFLSFINKIGMLPFVIYRLLLGAGLFALVWFA.

The next 8 helical transmembrane spans lie at 1–21 (MDIL…FLPI), 39–59 (QGLA…ILYF), 86–106 (WCII…GNFI), 112–132 (SVSV…FADA), 140–160 (LAQM…LAMI), 186–206 (FSFL…GLKL), 219–239 (VGVL…LSFI), and 244–264 (MLPF…LVWF).

Belongs to the UppP family.

It localises to the cell inner membrane. It carries out the reaction di-trans,octa-cis-undecaprenyl diphosphate + H2O = di-trans,octa-cis-undecaprenyl phosphate + phosphate + H(+). Its function is as follows. Catalyzes the dephosphorylation of undecaprenyl diphosphate (UPP). Confers resistance to bacitracin. The polypeptide is Undecaprenyl-diphosphatase (Saccharophagus degradans (strain 2-40 / ATCC 43961 / DSM 17024)).